A 358-amino-acid chain; its full sequence is tRNA-specific 2-thiouridylase MnmA (358 aa).

Residues 8–15 (GLSGGVDS) and Met34 each bind ATP. The tract at residues 94-96 (NPD) is interaction with target base in tRNA. Cys99 serves as the catalytic Nucleophile. Cys99 and Cys196 are disulfide-bonded. Gly123 is a binding site for ATP. The tract at residues 146 to 148 (KDQ) is interaction with tRNA. Cys196 functions as the Cysteine persulfide intermediate in the catalytic mechanism. Residues 308–309 (RY) form an interaction with tRNA region.

The protein belongs to the MnmA/TRMU family.

Its subcellular location is the cytoplasm. The catalysed reaction is S-sulfanyl-L-cysteinyl-[protein] + uridine(34) in tRNA + AH2 + ATP = 2-thiouridine(34) in tRNA + L-cysteinyl-[protein] + A + AMP + diphosphate + H(+). In terms of biological role, catalyzes the 2-thiolation of uridine at the wobble position (U34) of tRNA, leading to the formation of s(2)U34. This chain is tRNA-specific 2-thiouridylase MnmA, found in Thiobacillus denitrificans (strain ATCC 25259 / T1).